Consider the following 156-residue polypeptide: Small ribosomal subunit protein uS7 (156 aa).

This sequence belongs to the universal ribosomal protein uS7 family. As to quaternary structure, part of the 30S ribosomal subunit. Contacts proteins S9 and S11.

In terms of biological role, one of the primary rRNA binding proteins, it binds directly to 16S rRNA where it nucleates assembly of the head domain of the 30S subunit. Is located at the subunit interface close to the decoding center, probably blocks exit of the E-site tRNA. This is Small ribosomal subunit protein uS7 from Natranaerobius thermophilus (strain ATCC BAA-1301 / DSM 18059 / JW/NM-WN-LF).